The following is a 559-amino-acid chain: uncharacterized protein (559 aa).

Disordered regions lie at residues 315-360 (TDDA…ERDI) and 454-559 (DKID…STEN). Over residues 320-329 (NENSDNSMNT) the composition is skewed to polar residues. Acidic residues predominate over residues 348-357 (DNNDDSDDSE). A coiled-coil region spans residues 433–495 (ELKIQEMEKI…KRRQKRSQRS (63 aa)). Residues 454–501 (DKIDMDQIKSEMSRRRDESNKRRDEKRKDREEKRRQKRSQRSDTRKQG) show a composition bias toward basic and acidic residues. The segment covering 507–527 (SDEATSDQTQSTDSNNTTQTA) has biased composition (low complexity).

Its subcellular location is the virion. This is an uncharacterized protein from Acanthamoeba polyphaga mimivirus (APMV).